The primary structure comprises 372 residues: 4-hydroxy-3-methylbut-2-en-1-yl diphosphate synthase (flavodoxin) (372 aa).

[4Fe-4S] cluster is bound by residues C270, C273, C305, and E312.

It belongs to the IspG family. [4Fe-4S] cluster is required as a cofactor.

It carries out the reaction (2E)-4-hydroxy-3-methylbut-2-enyl diphosphate + oxidized [flavodoxin] + H2O + 2 H(+) = 2-C-methyl-D-erythritol 2,4-cyclic diphosphate + reduced [flavodoxin]. It participates in isoprenoid biosynthesis; isopentenyl diphosphate biosynthesis via DXP pathway; isopentenyl diphosphate from 1-deoxy-D-xylulose 5-phosphate: step 5/6. Converts 2C-methyl-D-erythritol 2,4-cyclodiphosphate (ME-2,4cPP) into 1-hydroxy-2-methyl-2-(E)-butenyl 4-diphosphate. The polypeptide is 4-hydroxy-3-methylbut-2-en-1-yl diphosphate synthase (flavodoxin) (Enterobacter sp. (strain 638)).